Consider the following 158-residue polypeptide: Eukaryotic translation initiation factor 5A-3 (158 aa).

Residues 1-10 (MSDDEHHFES) show a composition bias toward basic and acidic residues. Residues 1-23 (MSDDEHHFESSDAGASKTYPQQA) form a disordered region. Serine 2 carries the post-translational modification Phosphoserine. Lysine 51 is subject to Hypusine.

Belongs to the eIF-5A family. Lys-52 undergoes hypusination, a unique post-translational modification that consists in the addition of a butylamino group from spermidine to lysine side chain, leading to the formation of the unusual amino acid hypusine. eIF-5As are the only known proteins to undergo this modification, which is essential for their function. Expressed in the vascular tissues of roots, stems and leaves. Localized in phloem companion cells rather than sieve-tube members. Not expressed in xylem or procambium. Detected in root tips and in the chalazal tissue of fertilized ovules.

Its function is as follows. Translation factor that promotes translation elongation and termination, particularly upon ribosome stalling at specific amino acid sequence contexts. Binds between the exit (E) and peptidyl (P) site of the ribosome and promotes rescue of stalled ribosome: specifically required for efficient translation of polyproline-containing peptides as well as other motifs that stall the ribosome. Acts as a ribosome quality control (RQC) cofactor by joining the RQC complex to facilitate peptidyl transfer during CAT tailing step. Involved in supporting growth and plays a regulatory role in the response to sub-lethal osmotic and nutrient stress. The chain is Eukaryotic translation initiation factor 5A-3 (ELF5A-3) from Arabidopsis thaliana (Mouse-ear cress).